A 513-amino-acid polypeptide reads, in one-letter code: NADH-quinone oxidoreductase subunit N (513 aa).

Helical transmembrane passes span 20–40 (SVGFFIPEIYLSLLFMILIVV), 49–69 (STLLSVFSLVGLAGSLYFIYQ), 88–108 (FAIFFKYFFVLSGMLAVVITM), 117–137 (ISSMGEYYALVVAMVVGMMMM), 144–164 (LMIFLSMELVSFTAFILAGYF), 178–198 (LIYGAVSSGLMIYGFSLIYGV), 219–239 (FVMLFAALLVLAGFGYKIGAV), 260–280 (LSVASKAAGFALLMRFVYVAL), 295–315 (WFTLLVILAVASMIYGNVVAL), 323–343 (LLAYSSIAHAGYALLGVIVMD), 351–371 (LFYLLSYLLMNFGAFFVVVLI), 394–414 (GAALTVFLISLVGLPPTIGFI), 429–451 (IFMWLALIGILTSVISLYYYMLI), and 474–494 (LVAQLFMGALMLLTIYFGLFF).

Belongs to the complex I subunit 2 family. As to quaternary structure, NDH-1 is composed of 14 different subunits. Subunits NuoA, H, J, K, L, M, N constitute the membrane sector of the complex.

The protein localises to the cell inner membrane. The enzyme catalyses a quinone + NADH + 5 H(+)(in) = a quinol + NAD(+) + 4 H(+)(out). NDH-1 shuttles electrons from NADH, via FMN and iron-sulfur (Fe-S) centers, to quinones in the respiratory chain. The immediate electron acceptor for the enzyme in this species is believed to be a menaquinone. Couples the redox reaction to proton translocation (for every two electrons transferred, four hydrogen ions are translocated across the cytoplasmic membrane), and thus conserves the redox energy in a proton gradient. This Chlorobium chlorochromatii (strain CaD3) protein is NADH-quinone oxidoreductase subunit N.